The following is a 270-amino-acid chain: DNA repair protein RecO (270 aa).

It belongs to the RecO family.

In terms of biological role, involved in DNA repair and RecF pathway recombination. In Synechococcus sp. (strain WH7803), this protein is DNA repair protein RecO.